Consider the following 213-residue polypeptide: uncharacterized protein (213 aa).

Gly53, Glu74, and Asp97 together coordinate S-adenosyl-L-methionine.

This sequence belongs to the methyltransferase superfamily. YrrT family.

In terms of biological role, could be a S-adenosyl-L-methionine-dependent methyltransferase. This is an uncharacterized protein from Geobacillus sp. (strain WCH70).